We begin with the raw amino-acid sequence, 554 residues long: Tetratricopeptide repeat protein 34 (554 aa).

TPR repeat units lie at residues 38–71 (ETSC…RPQA), 166–199 (SESL…EPGN), 200–233 (VKAL…DPGT), 294–327 (PSWR…TPSS), 328–361 (EAAQ…DTQD), 411–445 (NPYH…PAED), 452–485 (SEDF…APAQ), and 500–533 (ASVF…DPSH).

This chain is Tetratricopeptide repeat protein 34 (Ttc34), found in Mus musculus (Mouse).